The sequence spans 433 residues: 3-phosphoshikimate 1-carboxyvinyltransferase (433 aa).

K15, S16, and R20 together coordinate 3-phosphoshikimate. Phosphoenolpyruvate is bound at residue K15. G96 and R124 together coordinate phosphoenolpyruvate. 3-phosphoshikimate-binding residues include S169, Q171, D318, and K345. Q171 contributes to the phosphoenolpyruvate binding site. The active-site Proton acceptor is D318. The phosphoenolpyruvate site is built by R349 and R393.

This sequence belongs to the EPSP synthase family. Monomer.

The protein resides in the cytoplasm. The catalysed reaction is 3-phosphoshikimate + phosphoenolpyruvate = 5-O-(1-carboxyvinyl)-3-phosphoshikimate + phosphate. Its pathway is metabolic intermediate biosynthesis; chorismate biosynthesis; chorismate from D-erythrose 4-phosphate and phosphoenolpyruvate: step 6/7. In terms of biological role, catalyzes the transfer of the enolpyruvyl moiety of phosphoenolpyruvate (PEP) to the 5-hydroxyl of shikimate-3-phosphate (S3P) to produce enolpyruvyl shikimate-3-phosphate and inorganic phosphate. The sequence is that of 3-phosphoshikimate 1-carboxyvinyltransferase from Chlorobium phaeovibrioides (strain DSM 265 / 1930) (Prosthecochloris vibrioformis (strain DSM 265)).